The sequence spans 138 residues: Large ribosomal subunit protein eL32 (138 aa).

It belongs to the eukaryotic ribosomal protein eL32 family.

This Saccharolobus solfataricus (strain ATCC 35092 / DSM 1617 / JCM 11322 / P2) (Sulfolobus solfataricus) protein is Large ribosomal subunit protein eL32 (rpl32e).